The following is a 2294-amino-acid chain: Protein Ycf2 (2294 aa).

Residue 1648–1655 (GSIGTGRS) coordinates ATP.

This sequence belongs to the Ycf2 family.

The protein resides in the plastid. Its subcellular location is the chloroplast stroma. Probable ATPase of unknown function. Its presence in a non-photosynthetic plant (Epifagus virginiana) and experiments in tobacco indicate that it has an essential function which is probably not related to photosynthesis. This chain is Protein Ycf2, found in Arabidopsis thaliana (Mouse-ear cress).